Here is a 274-residue protein sequence, read N- to C-terminus: MADEMSEPRRVGFVGAGRMAEAIAQGLIRAGKVEAKQVLASAPTDKNLCHFRALGCQTTHSNHEVLQNCPLVIFATKPQVLPAVLAEVAPVVTTEHIIVSVAAGISLSSMEELLPPKTRVLRVSPNLPCVVQEGAMVMTRGHHAGNEDAKLLQNLLEACGQCIEVPESYVDIHTGLSGSGVAFVCTFSEALAEGAIKMGMPSDLAHRIAAQTLLGTAKMLQQEGKHPAQLRTDVLTPAGTTIHGLHALEQGGFRAAAMSAVEAATCRAKELSKK.

A2 carries the post-translational modification N-acetylalanine.

Belongs to the pyrroline-5-carboxylate reductase family. In terms of assembly, homodecamer; composed of 5 homodimers.

Its subcellular location is the cytoplasm. It carries out the reaction L-proline + NADP(+) = (S)-1-pyrroline-5-carboxylate + NADPH + 2 H(+). It catalyses the reaction L-proline + NAD(+) = (S)-1-pyrroline-5-carboxylate + NADH + 2 H(+). It participates in amino-acid biosynthesis; L-proline biosynthesis; L-proline from L-glutamate 5-semialdehyde: step 1/1. Oxidoreductase that catalyzes the last step in proline biosynthesis, which corresponds to the reduction of pyrroline-5-carboxylate (P5C) to L-proline using NAD(P)H. Proline is synthesized from either glutamate or ornithine; both are converted to P5C, and then to proline via pyrroline-5-carboxylate reductases (PYCRs). PYCR3 is exclusively linked to the biosynthesis of proline from ornithine. In Rattus norvegicus (Rat), this protein is Pyrroline-5-carboxylate reductase 3.